Here is a 697-residue protein sequence, read N- to C-terminus: MAR-binding filament-like protein 1 (697 aa).

The N-terminal 41 residues, Met-1–Met-41, are a transit peptide targeting the chloroplast. The transit peptide at Ala-42–Glu-79 directs the protein to the thylakoid. Residues Gly-80 to Phe-106 lie on the Lumenal, thylakoid side of the membrane. Residues Leu-81 to Gly-100 are disordered. Residues Val-107–Leu-127 traverse the membrane as a helical segment. At Ala-128–Gln-697 the chain is on the stromal side. Positions Leu-203–Gln-671 form a coiled coil. The tract at residues Thr-599–Asn-629 is disordered. A compositionally biased stretch (basic and acidic residues) spans Ser-604–Ser-615. Residues Val-616–Gln-627 show a composition bias toward polar residues.

Interacts with MAF1. Interacts with PTST2; the interaction is essential for the initiation of starch granules biosynthesis in leaf chloroplasts, for the correct location of the process in the stromal spaces between the thylakoid membranes, and for the association of PTST2 with the thylakoid membranes. In terms of processing, phosphorylated in vitro by human casein kinase II. Post-translationally, predicted to be translocated into the thylakoid by the Tat system.

It localises to the plastid. It is found in the chloroplast. The protein localises to the chloroplast thylakoid membrane. The protein resides in the chloroplast stroma. Its subcellular location is the chloroplast nucleoid. It localises to the nucleus. It is found in the nucleus matrix. Its function is as follows. Required for the initiation of starch granules biosynthesis in leaf chloroplasts. Anchored to the thylakoid membranes with its C-terminus facing into the stroma where it is essential for localizing PTST2 and SS4 to the stromal spaces between the thylakoid membranes in order to begin starch granule formation. Associated with leaf chloroplastic nucleoids in vivo. Binds to various chloroplastic double-stranded DNA fragments without particular sequence specificity in vitro. May function at the interface between nucleoids and thylakoids possibly by anchoring nucleoids to the thylakoid membrane system in mature chloroplasts. Binds nuclear DNA. Interacts with chromatin via matrix attachment regions (MARs). Likely to participate in nuclear architecture by connecting chromatin with the nuclear matrix and potentially with the nuclear envelope. This Solanum lycopersicum (Tomato) protein is MAR-binding filament-like protein 1.